Here is a 309-residue protein sequence, read N- to C-terminus: Serine/threonine-protein phosphatase 2A catalytic subunit alpha isoform (309 aa).

Mn(2+) is bound by residues Asp-57, His-59, Asp-85, and Asn-117. 3 residues coordinate Zn(2+): Asp-57, His-59, and Asp-85. The Fe(3+) site is built by Asp-85 and Asn-117. The active-site Proton donor is His-118. Positions 167 and 241 each coordinate Mn(2+). Positions 167 and 241 each coordinate Fe(3+). At Tyr-307 the chain carries Phosphotyrosine. A Leucine methyl ester modification is found at Leu-309.

The protein belongs to the PPP phosphatase family. PP-1 subfamily. In terms of assembly, PP2A consists of a common heterodimeric core enzyme, composed of PPP2CA, a 36 kDa catalytic subunit (subunit C), and PPP2R1A, a 65 kDa constant regulatory subunit (PR65 or subunit A), that associates with a variety of regulatory subunits. Proteins that associate with the core dimer include three families of regulatory subunits B (the R2/B/PR55/B55, R3/B''/PR72/PR130/PR59 and R5/B'/B56 families), the 48 kDa variable regulatory subunit, viral proteins, and cell signaling molecules. May indirectly interact with SGOL1, most probably through regulatory B56 subunits. Phosphatase component of the Integrator-PP2A (INTAC) complex, composed of the Integrator core complex and protein phosphatase 2A subunits PPP2CA and PPP2R1A. Mn(2+) is required as a cofactor. The cofactor is Fe(3+). It depends on Zn(2+) as a cofactor. In terms of processing, reversibly methyl esterified on Leu-309 by leucine carboxyl methyltransferase 1 (LCMT1) and protein phosphatase methylesterase 1 (PPME1). Carboxyl methylation influences the affinity of the catalytic subunit for the different regulatory subunits, thereby modulating the PP2A holoenzyme's substrate specificity, enzyme activity and cellular localization. Post-translationally, phosphorylation of either threonine (by autophosphorylation-activated protein kinase) or tyrosine results in inactivation of the phosphatase. Auto-dephosphorylation has been suggested as a mechanism for reactivation.

The protein resides in the cytoplasm. It is found in the nucleus. The protein localises to the chromosome. It localises to the centromere. Its subcellular location is the cytoskeleton. The protein resides in the spindle pole. It catalyses the reaction O-phospho-L-seryl-[protein] + H2O = L-seryl-[protein] + phosphate. It carries out the reaction O-phospho-L-threonyl-[protein] + H2O = L-threonyl-[protein] + phosphate. With respect to regulation, inhibited by the interaction between PPP2R2A and ARPP19; this inhibition is enhanced when ARPP19 is phosphorylated. Inhibited by the interaction between PPP2R2A and PABIR1/FAM122A. In terms of biological role, PP2A is the major phosphatase for microtubule-associated proteins (MAPs). PP2A can modulate the activity of phosphorylase B kinase casein kinase 2, mitogen-stimulated S6 kinase, and MAP-2 kinase. Key mediator of a quality checkpoint during transcription elongation as part of the Integrator-PP2A (INTAC) complex. The INTAC complex drives premature transcription termination of transcripts that are unfavorably configured for transcriptional elongation: within the INTAC complex, PPP2CA catalyzes dephosphorylation of the C-terminal domain (CTD) of Pol II subunit POLR2A/RPB1 and SUPT5H/SPT5, thereby preventing transcriptional elongation. The protein is Serine/threonine-protein phosphatase 2A catalytic subunit alpha isoform (PPP2CA) of Gallus gallus (Chicken).